The primary structure comprises 252 residues: 2-succinyl-6-hydroxy-2,4-cyclohexadiene-1-carboxylate synthase (252 aa).

It belongs to the AB hydrolase superfamily. MenH family. As to quaternary structure, monomer.

The enzyme catalyses 5-enolpyruvoyl-6-hydroxy-2-succinyl-cyclohex-3-ene-1-carboxylate = (1R,6R)-6-hydroxy-2-succinyl-cyclohexa-2,4-diene-1-carboxylate + pyruvate. The protein operates within quinol/quinone metabolism; 1,4-dihydroxy-2-naphthoate biosynthesis; 1,4-dihydroxy-2-naphthoate from chorismate: step 3/7. Its pathway is quinol/quinone metabolism; menaquinone biosynthesis. Functionally, catalyzes a proton abstraction reaction that results in 2,5-elimination of pyruvate from 2-succinyl-5-enolpyruvyl-6-hydroxy-3-cyclohexene-1-carboxylate (SEPHCHC) and the formation of 2-succinyl-6-hydroxy-2,4-cyclohexadiene-1-carboxylate (SHCHC). The protein is 2-succinyl-6-hydroxy-2,4-cyclohexadiene-1-carboxylate synthase of Salmonella agona (strain SL483).